A 388-amino-acid polypeptide reads, in one-letter code: Arginine biosynthesis bifunctional protein ArgJ 2 (388 aa).

Residues threonine 145, lysine 167, threonine 178, glutamate 257, and asparagine 381 each coordinate substrate. Threonine 178 (nucleophile) is an active-site residue.

It belongs to the ArgJ family. As to quaternary structure, heterotetramer of two alpha and two beta chains.

Its subcellular location is the cytoplasm. The enzyme catalyses N(2)-acetyl-L-ornithine + L-glutamate = N-acetyl-L-glutamate + L-ornithine. It catalyses the reaction L-glutamate + acetyl-CoA = N-acetyl-L-glutamate + CoA + H(+). The protein operates within amino-acid biosynthesis; L-arginine biosynthesis; L-ornithine and N-acetyl-L-glutamate from L-glutamate and N(2)-acetyl-L-ornithine (cyclic): step 1/1. It participates in amino-acid biosynthesis; L-arginine biosynthesis; N(2)-acetyl-L-ornithine from L-glutamate: step 1/4. Functionally, catalyzes two activities which are involved in the cyclic version of arginine biosynthesis: the synthesis of N-acetylglutamate from glutamate and acetyl-CoA as the acetyl donor, and of ornithine by transacetylation between N(2)-acetylornithine and glutamate. This chain is Arginine biosynthesis bifunctional protein ArgJ 2, found in Clostridium acetobutylicum (strain ATCC 824 / DSM 792 / JCM 1419 / IAM 19013 / LMG 5710 / NBRC 13948 / NRRL B-527 / VKM B-1787 / 2291 / W).